A 520-amino-acid chain; its full sequence is Polyprenol-phosphate-mannose--protein mannosyltransferase (520 aa).

Helical transmembrane passes span tryptophan 38–alanine 58, leucine 119–isoleucine 139, glycine 145–valine 165, arginine 168–isoleucine 188, tryptophan 237–leucine 257, aspartate 274–tryptophan 294, isoleucine 388–leucine 408, glycine 418–aspartate 438, methionine 441–cysteine 461, and tyrosine 485–isoleucine 505.

Belongs to the glycosyltransferase 39 family.

It localises to the cell membrane. It functions in the pathway protein modification; protein glycosylation. Protein O-mannosyltransferase that catalyzes the transfer of a single mannose residue from a polyprenol phospho-mannosyl lipidic donor to the hydroxyl group of selected serine and threonine residues in acceptor proteins. This chain is Polyprenol-phosphate-mannose--protein mannosyltransferase (pmt), found in Corynebacterium glutamicum (strain ATCC 13032 / DSM 20300 / JCM 1318 / BCRC 11384 / CCUG 27702 / LMG 3730 / NBRC 12168 / NCIMB 10025 / NRRL B-2784 / 534).